The sequence spans 451 residues: tRNA modification GTPase MnmE (451 aa).

(6S)-5-formyl-5,6,7,8-tetrahydrofolate is bound by residues arginine 25, glutamate 82, and lysine 121. The 158-residue stretch at 217–374 folds into the TrmE-type G domain; the sequence is GMSVVILGRP…LKQHLKTEMG (158 aa). A K(+)-binding site is contributed by asparagine 227. GTP contacts are provided by residues 227-232, 246-252, and 271-274; these read NAGKSS, TDIAGTT, and DTAG. Serine 231 provides a ligand contact to Mg(2+). K(+) contacts are provided by threonine 246, isoleucine 248, and threonine 251. Threonine 252 is a Mg(2+) binding site. Lysine 451 contributes to the (6S)-5-formyl-5,6,7,8-tetrahydrofolate binding site.

This sequence belongs to the TRAFAC class TrmE-Era-EngA-EngB-Septin-like GTPase superfamily. TrmE GTPase family. In terms of assembly, homodimer. Heterotetramer of two MnmE and two MnmG subunits. K(+) is required as a cofactor.

The protein localises to the cytoplasm. Functionally, exhibits a very high intrinsic GTPase hydrolysis rate. Involved in the addition of a carboxymethylaminomethyl (cmnm) group at the wobble position (U34) of certain tRNAs, forming tRNA-cmnm(5)s(2)U34. The protein is tRNA modification GTPase MnmE of Hydrogenovibrio crunogenus (strain DSM 25203 / XCL-2) (Thiomicrospira crunogena).